The primary structure comprises 406 residues: Tyrosine--tRNA ligase (406 aa).

Tyrosine 35 is an L-tyrosine binding site. The 'HIGH' region motif lies at 40-49; sequence ATSASLHIGH. Positions 167 and 171 each coordinate L-tyrosine. A 'KMSKS' region motif is present at residues 227 to 231; it reads KMGKS. Lysine 230 is an ATP binding site. Residues 341–405 enclose the S4 RNA-binding domain; the sequence is ILLVDLMVLA…IGKKKILRIV (65 aa).

Belongs to the class-I aminoacyl-tRNA synthetase family. TyrS type 1 subfamily. As to quaternary structure, homodimer.

It is found in the cytoplasm. It catalyses the reaction tRNA(Tyr) + L-tyrosine + ATP = L-tyrosyl-tRNA(Tyr) + AMP + diphosphate + H(+). Its function is as follows. Catalyzes the attachment of tyrosine to tRNA(Tyr) in a two-step reaction: tyrosine is first activated by ATP to form Tyr-AMP and then transferred to the acceptor end of tRNA(Tyr). This Borrelia duttonii (strain Ly) protein is Tyrosine--tRNA ligase.